The sequence spans 37 residues: Large ribosomal subunit protein bL36A (37 aa).

This sequence belongs to the bacterial ribosomal protein bL36 family.

This chain is Large ribosomal subunit protein bL36A, found in Actinobacillus pleuropneumoniae serotype 3 (strain JL03).